We begin with the raw amino-acid sequence, 917 residues long: Major intrinsically disordered Notch2-binding receptor 1 (917 aa).

The Cytoplasmic portion of the chain corresponds to 1–892 (MEANQEASLF…AEFRRAKVCK (892 aa)). Disordered regions lie at residues 337–367 (STYF…WPAK), 388–410 (PSEE…GPDR), 461–483 (SCTS…QHVL), 568–588 (ITNG…NVHH), 652–687 (SEAP…CSDA), 706–727 (TRPS…IASI), and 746–783 (NEEE…LPKQ). The span at 461-480 (SCTSGQHSSDTSSVGTQTEQ) shows a compositional bias: polar residues. A compositionally biased stretch (basic and acidic residues) spans 576-588 (KGDKCNRPENVHH). Phosphoserine is present on Ser712. A helical membrane pass occupies residues 893 to 913 (IAALITAAACTVILVIVVPIC). Residues 914–917 (TMKS) are Extracellular-facing.

Belongs to the MINAR family. In terms of assembly, interacts with NOTCH2; this interaction increases MINAR1 stability. Interacts (via N-terminus) with DEPTOR (via PDZ domain); this interaction may stabilize DEPTOR protein by impairing its ubiquitination. Expressed in brain and in islets of Langerhans.

It localises to the cell membrane. Intrinsically disordered protein which may negatively regulate mTOR signaling pathway by stabilizing the mTOR complex component DEPTOR. Negatively regulates angiogenesis. Negatively regulates cell growth. Negatively regulates neurite outgrowth in hippocampal neurons. This Mus musculus (Mouse) protein is Major intrinsically disordered Notch2-binding receptor 1 (Minar1).